Reading from the N-terminus, the 543-residue chain is Chaperonin GroEL 2 (543 aa).

Residues 29–32 (TLGP), 86–90 (DGTTT), glycine 413, 477–479 (DAA), and aspartate 493 each bind ATP. The tract at residues 523 to 543 (PQEPEPAAGGHGHGHQHGPGF) is disordered. Over residues 534 to 543 (GHGHQHGPGF) the composition is skewed to basic residues.

Belongs to the chaperonin (HSP60) family. As to quaternary structure, forms a cylinder of 14 subunits composed of two heptameric rings stacked back-to-back. Interacts with the co-chaperonin GroES.

It localises to the cytoplasm. The enzyme catalyses ATP + H2O + a folded polypeptide = ADP + phosphate + an unfolded polypeptide.. Functionally, together with its co-chaperonin GroES, plays an essential role in assisting protein folding. The GroEL-GroES system forms a nano-cage that allows encapsulation of the non-native substrate proteins and provides a physical environment optimized to promote and accelerate protein folding. The chain is Chaperonin GroEL 2 from Salinispora tropica (strain ATCC BAA-916 / DSM 44818 / JCM 13857 / NBRC 105044 / CNB-440).